The primary structure comprises 194 residues: Peptidyl-tRNA hydrolase (194 aa).

Residue Y17 participates in tRNA binding. The Proton acceptor role is filled by H22. TRNA-binding residues include Y68, N70, and N116.

This sequence belongs to the PTH family. In terms of assembly, monomer.

Its subcellular location is the cytoplasm. The enzyme catalyses an N-acyl-L-alpha-aminoacyl-tRNA + H2O = an N-acyl-L-amino acid + a tRNA + H(+). In terms of biological role, hydrolyzes ribosome-free peptidyl-tRNAs (with 1 or more amino acids incorporated), which drop off the ribosome during protein synthesis, or as a result of ribosome stalling. Catalyzes the release of premature peptidyl moieties from peptidyl-tRNA molecules trapped in stalled 50S ribosomal subunits, and thus maintains levels of free tRNAs and 50S ribosomes. In Pseudomonas savastanoi pv. phaseolicola (strain 1448A / Race 6) (Pseudomonas syringae pv. phaseolicola (strain 1448A / Race 6)), this protein is Peptidyl-tRNA hydrolase.